We begin with the raw amino-acid sequence, 611 residues long: Actin-binding LIM protein 2 (611 aa).

LIM zinc-binding domains follow at residues 22–81, 81–141, 151–210, and 210–270; these read ILCN…LYGT, TRCF…VSVG, RSCG…KFGI, and IRCD…ARTE. The Zn(2+) site is built by Cys83, Cys86, His103, Cys106, Cys109, Cys112, Cys131, and Cys134. 8 residues coordinate Zn(2+): Cys212, Cys215, His232, Cys235, Cys238, Cys241, His260, and Cys263. Over residues 269–278 the composition is skewed to basic and acidic residues; sequence TEDRNKETRT. 2 disordered regions span residues 269 to 295 and 336 to 527; these read TEDR…SGSP and YISH…DQRN. Composition is skewed to low complexity over residues 279–295 and 363–372; these read SSES…SGSP and SSPSSTGSVS. Ser282, Ser294, Ser364, and Ser367 each carry phosphoserine. Over residues 393 to 404 the composition is skewed to polar residues; it reads SGRSTPSLSVLS. Position 452 is a phosphoserine (Ser452). Thr472 carries the phosphothreonine modification. The segment covering 473–488 has biased composition (polar residues); it reads RTNSPDLDTQSLSHSS. Residues Ser476 and Ser578 each carry the phosphoserine modification. The HP domain occupies 543 to 611; sequence MREYKIYPYD…NDLKKKALLF (69 aa).

Interacts with F-actin and ABRA. Highly expressed in skeletal muscle.

It localises to the cytoplasm. May act as scaffold protein. May stimulate ABRA activity and ABRA-dependent SRF transcriptional activity. The chain is Actin-binding LIM protein 2 (ABLIM2) from Homo sapiens (Human).